The chain runs to 467 residues: ATP synthase subunit beta (467 aa).

Residue 156-163 participates in ATP binding; it reads GGAGVGKT.

Belongs to the ATPase alpha/beta chains family. F-type ATPases have 2 components, CF(1) - the catalytic core - and CF(0) - the membrane proton channel. CF(1) has five subunits: alpha(3), beta(3), gamma(1), delta(1), epsilon(1). CF(0) has three main subunits: a(1), b(2) and c(9-12). The alpha and beta chains form an alternating ring which encloses part of the gamma chain. CF(1) is attached to CF(0) by a central stalk formed by the gamma and epsilon chains, while a peripheral stalk is formed by the delta and b chains.

It localises to the cell inner membrane. The catalysed reaction is ATP + H2O + 4 H(+)(in) = ADP + phosphate + 5 H(+)(out). Functionally, produces ATP from ADP in the presence of a proton gradient across the membrane. The catalytic sites are hosted primarily by the beta subunits. The protein is ATP synthase subunit beta of Cupriavidus taiwanensis (strain DSM 17343 / BCRC 17206 / CCUG 44338 / CIP 107171 / LMG 19424 / R1) (Ralstonia taiwanensis (strain LMG 19424)).